A 170-amino-acid polypeptide reads, in one-letter code: Peptide deformylase (170 aa).

Cys88 and His130 together coordinate Fe cation. Residue Glu131 is part of the active site. A Fe cation-binding site is contributed by His134.

The protein belongs to the polypeptide deformylase family. Fe(2+) serves as cofactor.

The catalysed reaction is N-terminal N-formyl-L-methionyl-[peptide] + H2O = N-terminal L-methionyl-[peptide] + formate. Its function is as follows. Removes the formyl group from the N-terminal Met of newly synthesized proteins. Requires at least a dipeptide for an efficient rate of reaction. N-terminal L-methionine is a prerequisite for activity but the enzyme has broad specificity at other positions. The chain is Peptide deformylase from Acetivibrio thermocellus (strain ATCC 27405 / DSM 1237 / JCM 9322 / NBRC 103400 / NCIMB 10682 / NRRL B-4536 / VPI 7372) (Clostridium thermocellum).